We begin with the raw amino-acid sequence, 71 residues long: Conotoxin PnMEKL-032 (71 aa).

The N-terminal stretch at methionine 1 to alanine 19 is a signal peptide. Residues leucine 20 to arginine 46 constitute a propeptide that is removed on maturation. 3 disulfide bridges follow: cysteine 48-cysteine 62, cysteine 55-cysteine 66, and cysteine 61-cysteine 70.

Belongs to the conotoxin O2 superfamily. As to expression, expressed by the venom duct.

The protein resides in the secreted. This Conus pennaceus (Feathered cone) protein is Conotoxin PnMEKL-032.